The chain runs to 245 residues: tRNA (guanine-N(7)-)-methyltransferase (245 aa).

S-adenosyl-L-methionine is bound by residues E75, E100, D127, and D149. D149 is a catalytic residue. Residues K153, D185, and T222–E225 contribute to the substrate site.

Belongs to the class I-like SAM-binding methyltransferase superfamily. TrmB family.

It carries out the reaction guanosine(46) in tRNA + S-adenosyl-L-methionine = N(7)-methylguanosine(46) in tRNA + S-adenosyl-L-homocysteine. The protein operates within tRNA modification; N(7)-methylguanine-tRNA biosynthesis. In terms of biological role, catalyzes the formation of N(7)-methylguanine at position 46 (m7G46) in tRNA. The sequence is that of tRNA (guanine-N(7)-)-methyltransferase from Acinetobacter baylyi (strain ATCC 33305 / BD413 / ADP1).